The sequence spans 90 residues: Probable Fe(2+)-trafficking protein (90 aa).

It belongs to the Fe(2+)-trafficking protein family.

Could be a mediator in iron transactions between iron acquisition and iron-requiring processes, such as synthesis and/or repair of Fe-S clusters in biosynthetic enzymes. The sequence is that of Probable Fe(2+)-trafficking protein from Thioalkalivibrio sulfidiphilus (strain HL-EbGR7).